The chain runs to 180 residues: MAAGTAAALAFLSQESRTRAGGVGGLRVPAPVTMDSFFFGCELSGHTRSFTFKVEEEDDAEHVLALTMLCLTEGAKDECNVVEVVARNHDHQEIAVPVANLKLSCQPMLSLDDFQLQPPVTFRLKSGSGPVRITGRHQIVTMSNDVSEEESEEEEEEEDSDEEEAELCPILPAKKQGGRP.

Ala-2 is subject to N-acetylalanine. 2 positions are modified to phosphoserine: Ser-13 and Ser-16. At Arg-27 the chain carries Omega-N-methylarginine. The segment at 141–180 is disordered; that stretch reads TMSNDVSEEESEEEEEEEDSDEEEAELCPILPAKKQGGRP. Over residues 146-166 the composition is skewed to acidic residues; it reads VSEEESEEEEEEEDSDEEEAE. 3 positions are modified to phosphoserine: Ser-147, Ser-151, and Ser-160.

This sequence belongs to the nucleoplasmin family. In terms of assembly, interacts with NPM (via N-terminus). Forms a pentamer with NPM at a ratio 4:1 (NPM3/NPM). Two pentamers form a decamer. Phosphorylated.

It is found in the nucleus. The protein resides in the nucleolus. Its function is as follows. Plays a role in the regulation of diverse cellular processes such as ribosome biogenesis, chromatin remodeling or protein chaperoning. Modulates the histone chaperone function and the RNA-binding activity of nucleolar phosphoprotein B23/NPM. Efficiently mediates chromatin remodeling when included in a pentamer containing NPM3 and NPM. This chain is Nucleoplasmin-3 (NPM3), found in Pongo abelii (Sumatran orangutan).